Consider the following 1898-residue polypeptide: Receptor-type tyrosine-protein phosphatase F (1898 aa).

Positions 1–29 (MAPEPAPGRRMVPLVPALVMLGLMAGAHG) are cleaved as a signal peptide. Residues 30–1254 (DSKPVFVKVP…QQQEEPEMLW (1225 aa)) are Extracellular-facing. 3 consecutive Ig-like C2-type domains span residues 33-123 (PVFV…AKLS), 135-224 (PTID…ANLY), and 232-314 (PRFS…AQVT). C54 and C107 are oxidised to a cystine. 68 to 77 (KKGKKVSSQR) is a heparin binding site. N-linked (GlcNAc...) asparagine glycosylation occurs at N117. A disulfide bridge connects residues C156 and C207. 2 N-linked (GlcNAc...) asparagine glycosylation sites follow: N250 and N295. A disulfide bond links C253 and C298. Fibronectin type-III domains follow at residues 321 to 411 (PPID…TGEQ), 416 to 510 (PPRR…TQQG), 514 to 604 (QPAD…TAQS), 609 to 706 (PPQK…TDED), 711 to 810 (PPRK…TTGA), 811 to 905 (VPGR…PEDA), 909 to 1001 (FPQN…TMPM), and 1005 to 1089 (FAKN…TAPD). Positions 693–713 (GPESSPVLVRTDEDVPSGPPR) are disordered. An N-linked (GlcNAc...) asparagine glycan is attached at N721. 2 N-linked (GlcNAc...) asparagine glycosylation sites follow: N941 and N957. The chain crosses the membrane as a helical span at residues 1255–1275 (VTGPVLAVILIILIVIAILLF). Residues 1276–1898 (KRKRTHSPSS…YLGSFDHYAT (623 aa)) lie on the Cytoplasmic side of the membrane. Residue S1296 is modified to Phosphoserine. 2 Tyrosine-protein phosphatase domains span residues 1343-1598 (FSQE…LLEA) and 1630-1889 (MELE…ALEY). Residues D1507, 1539 to 1545 (CSAGVGR), and Q1583 contribute to the substrate site. C1539 serves as the catalytic Phosphocysteine intermediate. C1830 serves as the catalytic Phosphocysteine intermediate.

Belongs to the protein-tyrosine phosphatase family. Receptor class 2A subfamily. Interacts with GRIP1. Interacts with PPFIA1, PPFIA2 and PPFIA3. Interacts with PTPRF.

Its subcellular location is the membrane. The enzyme catalyses O-phospho-L-tyrosyl-[protein] + H2O = L-tyrosyl-[protein] + phosphate. In terms of biological role, possible cell adhesion receptor. It possesses an intrinsic protein tyrosine phosphatase activity (PTPase) and dephosphorylates EPHA2 regulating its activity. Its function is as follows. The first PTPase domain has enzymatic activity, while the second one seems to affect the substrate specificity of the first one. The chain is Receptor-type tyrosine-protein phosphatase F (Ptprf) from Rattus norvegicus (Rat).